Reading from the N-terminus, the 342-residue chain is Peroxisomal membrane protein import receptor PEX19 (342 aa).

Over residues 1–18 (MNENEYDNFDDLDDLLDE) the composition is skewed to acidic residues. Disordered stretches follow at residues 1-68 (MNEN…DPEL) and 119-141 (CSSL…GFKN). Basic and acidic residues predominate over residues 41-54 (SENKEKNAESKDSD). Position 62 is a phosphoserine (Ser-62). Ser-304 is modified (phosphoserine). The interval 321–342 (IDGNDPNLGNLDKELTDGCKQQ) is disordered. Residues 331-342 (LDKELTDGCKQQ) show a composition bias toward basic and acidic residues. Residue Cys-339 is modified to Cysteine methyl ester. The S-farnesyl cysteine moiety is linked to residue Cys-339. Positions 340 to 342 (KQQ) are cleaved as a propeptide — removed in mature form.

The protein belongs to the peroxin-19 family. Interacts (farnesylated) with PEX3; farnesylation is required for this interaction. Interacts with PEX2, PEX5, PEX10, PEX11, PEX12, PEX13, PEX14, PEX17, PEX22, PEX25, PEX30 and PEX32; the interaction requires well-defined PEX19-binding sites within the peroxisomal membrane protein targeting signal (mPTS) of the PMPs and is independent on the presence of PEX3. Interacts with VPS1.

It localises to the cytoplasm. It is found in the peroxisome membrane. The protein resides in the endoplasmic reticulum membrane. Its function is as follows. Required for proper post-translational import and stabilization of peroxisomal membrane proteins (PMPs). Acts as a cytosolic import receptor for PMPs and delivers them to the docking factor PEX3 at the peroxisomal membrane for subsequent insertion into the membrane. Acts as a chaperone in stabilizing or maintaining PMPs in the lipid bilayer. Directs PEX17, a peripheral component of the peroxisomal matrix protein translocation machinery, to peroxisomes. Stabilizes VPS1, a protein required for peroxisomal fission, at the peroxisomal membrane. Also acts in conjunction with PEX3 in the formation of peroxisomes from preperoxisomal compartments at the endoplasmic reticulum during de novo peroxisome synthesis, probably via the import of additional PMPs. This Saccharomyces cerevisiae (strain ATCC 204508 / S288c) (Baker's yeast) protein is Peroxisomal membrane protein import receptor PEX19 (PEX19).